A 520-amino-acid polypeptide reads, in one-letter code: Sterile alpha motif domain-containing protein 3 (520 aa).

The SAM domain occupies 4 to 71 (WSVDQVCKWL…KYKQGNQELK (68 aa)). Positions 67-104 (NQELKPTGGPADTSTLTPAQAAPEHEQNPSPTSHGDQT) are disordered. Residues 94–104 (NPSPTSHGDQT) show a composition bias toward polar residues.

This chain is Sterile alpha motif domain-containing protein 3 (Samd3), found in Mus musculus (Mouse).